Reading from the N-terminus, the 264-residue chain is Type III pantothenate kinase (264 aa).

Residue 6-13 (DVGNTNIK) participates in ATP binding. Substrate is bound at residue 108–111 (GSDR). Aspartate 110 serves as the catalytic Proton acceptor. Threonine 134 is an ATP binding site.

This sequence belongs to the type III pantothenate kinase family. In terms of assembly, homodimer. Requires NH4(+) as cofactor. K(+) is required as a cofactor.

It is found in the cytoplasm. It carries out the reaction (R)-pantothenate + ATP = (R)-4'-phosphopantothenate + ADP + H(+). Its pathway is cofactor biosynthesis; coenzyme A biosynthesis; CoA from (R)-pantothenate: step 1/5. Its function is as follows. Catalyzes the phosphorylation of pantothenate (Pan), the first step in CoA biosynthesis. The protein is Type III pantothenate kinase of Ehrlichia canis (strain Jake).